A 32-amino-acid chain; its full sequence is Photosystem II reaction center protein T (32 aa).

A helical membrane pass occupies residues 3 to 23 (ALVYTFLLIGTLIVIFFAVFF).

The protein belongs to the PsbT family. As to quaternary structure, PSII is composed of 1 copy each of membrane proteins PsbA, PsbB, PsbC, PsbD, PsbE, PsbF, PsbH, PsbI, PsbJ, PsbK, PsbL, PsbM, PsbT, PsbX, PsbY, PsbZ, Psb30/Ycf12, at least 3 peripheral proteins of the oxygen-evolving complex and a large number of cofactors. It forms dimeric complexes.

The protein resides in the plastid. It localises to the chloroplast thylakoid membrane. Its function is as follows. Found at the monomer-monomer interface of the photosystem II (PS II) dimer, plays a role in assembly and dimerization of PSII. PSII is a light-driven water plastoquinone oxidoreductase, using light energy to abstract electrons from H(2)O, generating a proton gradient subsequently used for ATP formation. This chain is Photosystem II reaction center protein T, found in Phaeodactylum tricornutum (strain CCAP 1055/1).